The sequence spans 90 residues: Neurotoxin LmNaTx19 (90 aa).

Residues 1-19 (MNHLILIVAMCLMVIGVQC) form the signal peptide. Positions 21-80 (KDGYLYDDVDCKFSCWDNEYCRKLCKSKKAVGGYCWRWRFSCYCTGLPDNEKTEGTYKCG) constitute an LCN-type CS-alpha/beta domain. Cystine bridges form between Cys-31–Cys-79, Cys-35–Cys-55, Cys-41–Cys-62, and Cys-45–Cys-64.

This sequence belongs to the long (4 C-C) scorpion toxin superfamily. Sodium channel inhibitor family. Alpha subfamily. As to expression, expressed by the venom gland.

The protein resides in the secreted. Its function is as follows. Binds voltage-independently at site-3 of voltage-gated sodium channels (Nav) and inhibits the inactivation of the activated channels, thereby blocking neuronal transmission. The polypeptide is Neurotoxin LmNaTx19 (Lychas mucronatus (Chinese swimming scorpion)).